An 87-amino-acid polypeptide reads, in one-letter code: Putative defensin-like protein 317 (87 aa).

An N-terminal signal peptide occupies residues 1 to 24 (MKSFLVAFLIVLVFFCVEMKIGNG). Cystine bridges form between cysteine 38–cysteine 71, cysteine 47–cysteine 80, and cysteine 56–cysteine 82.

The protein belongs to the DEFL family.

It localises to the secreted. This is Putative defensin-like protein 317 from Arabidopsis thaliana (Mouse-ear cress).